The sequence spans 114 residues: T cell receptor beta variable 19 (114 aa).

Positions 1 to 21 (MSNQVLCCVVLCLLGANTVDG) are cleaved as a signal peptide. The region spanning 22–114 (GITQSPKYLF…TAFYLCASSI (93 aa)) is the Ig-like domain. A glycan (N-linked (GlcNAc...) asparagine) is linked at N37. Cysteines 42 and 110 form a disulfide.

Alpha-beta TR is a heterodimer composed of an alpha and beta chain; disulfide-linked. The alpha-beta TR is associated with the transmembrane signaling CD3 coreceptor proteins to form the TR-CD3 (TcR or TCR). The assembly of alpha-beta TR heterodimers with CD3 occurs in the endoplasmic reticulum where a single alpha-beta TR heterodimer associates with one CD3D-CD3E heterodimer, one CD3G-CD3E heterodimer and one CD247 homodimer forming a stable octameric structure. CD3D-CD3E and CD3G-CD3E heterodimers preferentially associate with TR alpha and TR beta chains, respectively. The association of the CD247 homodimer is the last step of TcR assembly in the endoplasmic reticulum and is required for transport to the cell surface. In terms of assembly, (Microbial infection) Interacts with Staphylococcus aureus enterotoxin type B/SEB.

The protein resides in the cell membrane. V region of the variable domain of T cell receptor (TR) beta chain that participates in the antigen recognition. Alpha-beta T cell receptors are antigen specific receptors which are essential to the immune response and are present on the cell surface of T lymphocytes. Recognize peptide-major histocompatibility (MH) (pMH) complexes that are displayed by antigen presenting cells (APC), a prerequisite for efficient T cell adaptive immunity against pathogens. Binding of alpha-beta TR to pMH complex initiates TR-CD3 clustering on the cell surface and intracellular activation of LCK that phosphorylates the ITAM motifs of CD3G, CD3D, CD3E and CD247 enabling the recruitment of ZAP70. In turn ZAP70 phosphorylates LAT, which recruits numerous signaling molecules to form the LAT signalosome. The LAT signalosome propagates signal branching to three major signaling pathways, the calcium, the mitogen-activated protein kinase (MAPK) kinase and the nuclear factor NF-kappa-B (NF-kB) pathways, leading to the mobilization of transcription factors that are critical for gene expression and essential for T cell growth and differentiation. The T cell repertoire is generated in the thymus, by V-(D)-J rearrangement. This repertoire is then shaped by intrathymic selection events to generate a peripheral T cell pool of self-MH restricted, non-autoaggressive T cells. Post-thymic interaction of alpha-beta TR with the pMH complexes shapes TR structural and functional avidity. This is T cell receptor beta variable 19 from Homo sapiens (Human).